Consider the following 470-residue polypeptide: uncharacterized protein (470 aa).

The 69-residue stretch at 1–69 (MTRYQHLATL…PRSGYFVAQR (69 aa)) folds into the HTH gntR-type domain. Lys-313 is subject to N6-(pyridoxal phosphate)lysine.

The protein in the C-terminal section; belongs to the class-I pyridoxal-phosphate-dependent aminotransferase family.

This is an uncharacterized protein from Escherichia coli (strain K12).